The chain runs to 394 residues: Small ribosomal subunit protein uS2m (394 aa).

The N-terminal 25 residues, 1-25 (MQRHVFARNFRRLSLLRNPSLTKRF), are a transit peptide targeting the mitochondrion.

It belongs to the universal ribosomal protein uS2 family. As to quaternary structure, component of the mitochondrial small ribosomal subunit (mt-SSU). Mature yeast 74S mitochondrial ribosomes consist of a small (37S) and a large (54S) subunit. The 37S small subunit contains a 15S ribosomal RNA (15S mt-rRNA) and 34 different proteins. The 54S large subunit contains a 21S rRNA (21S mt-rRNA) and 46 different proteins.

It is found in the mitochondrion. In terms of biological role, component of the mitochondrial ribosome (mitoribosome), a dedicated translation machinery responsible for the synthesis of mitochondrial genome-encoded proteins, including at least some of the essential transmembrane subunits of the mitochondrial respiratory chain. The mitoribosomes are attached to the mitochondrial inner membrane and translation products are cotranslationally integrated into the membrane. This Saccharomyces cerevisiae (strain ATCC 204508 / S288c) (Baker's yeast) protein is Small ribosomal subunit protein uS2m (MRP4).